We begin with the raw amino-acid sequence, 297 residues long: 33 kDa chaperonin (297 aa).

2 disulfide bridges follow: Cys232-Cys234 and Cys266-Cys269.

This sequence belongs to the HSP33 family. Post-translationally, under oxidizing conditions two disulfide bonds are formed involving the reactive cysteines. Under reducing conditions zinc is bound to the reactive cysteines and the protein is inactive.

It is found in the cytoplasm. Redox regulated molecular chaperone. Protects both thermally unfolding and oxidatively damaged proteins from irreversible aggregation. Plays an important role in the bacterial defense system toward oxidative stress. The chain is 33 kDa chaperonin from Pseudomonas aeruginosa (strain UCBPP-PA14).